The primary structure comprises 427 residues: Mitochondrial fission protein ELM1 (427 aa).

In terms of assembly, interacts with DRP3 and DRP3B.

The protein resides in the mitochondrion outer membrane. In terms of biological role, plant-specific factor involved in mitochondria fission. Is required for the correct localization of DRP3A from the cytosol to mitochondrial fission sites. Does not seem to be required for peroxisomal division. The chain is Mitochondrial fission protein ELM1 (ELM1) from Arabidopsis thaliana (Mouse-ear cress).